Here is a 296-residue protein sequence, read N- to C-terminus: MFGAFVSHRLWSDSGCTTTCITNSIANYVAFGEQIGFPFKSAQVFIAGPRKAVINIQEDDKVELLKMIVKHNLWVVAHGTYLDVPWSRRSAFVTHFIQQELLICKEVGIKGLVLHLGAVEPELIVEGLKKIKPVEGVVIYLETPHNKHHTYKYSTMEQIKELFLRIRNTRLKQIGLCIDTAHIWSSGVNISSYNDAGQWLRSLENIHSVIPPSHIMFHLNDAATECGSGIDRHASLFEGMIWKSYSHKIKKSGLYCFVEYITRHQCPAILERNLGSSMQLQTALTAEFTTLKSLLK.

The cysteines at positions 16 and 20 are disulfide-linked. Zn(2+)-binding residues include H78, H115, E142, H182, H218, D231, H233, and E271.

This sequence belongs to the AP endonuclease 2 family. The cofactor is Zn(2+).

The protein resides in the host nucleus. It is found in the host cytoplasm. Its subcellular location is the virion. Functionally, endonuclease of the viral base excision repair system that catalyzes DNA cleavage reaction at the apurinic or apyrimidinic sites (AP sites). Cleaves phosphodiester bonds on the 5' side of AP sites. In addition to endonuclease activity, the AP endonuclease has a proofreading 3'-5' exonuclease activity that is considerably more efficient in the elimination of a mismatch than in that of a correctly paired base. Displays 3'-phosphatase and 3'-repair diesterase activities. The single nucleotide gaps generated by the AP endonuclease are filled by the viral repair DNA polymerase X and the DNA ligase. In Ornithodoros (relapsing fever ticks), this protein is Probable AP endonuclease.